The chain runs to 297 residues: Urease accessory protein UreD (297 aa).

This sequence belongs to the UreD family. As to quaternary structure, ureD, UreF and UreG form a complex that acts as a GTP-hydrolysis-dependent molecular chaperone, activating the urease apoprotein by helping to assemble the nickel containing metallocenter of UreC. The UreE protein probably delivers the nickel.

It is found in the cytoplasm. In terms of biological role, required for maturation of urease via the functional incorporation of the urease nickel metallocenter. The chain is Urease accessory protein UreD from Prochlorococcus marinus subsp. pastoris (strain CCMP1986 / NIES-2087 / MED4).